Reading from the N-terminus, the 442-residue chain is tRNA-2-methylthio-N(6)-dimethylallyladenosine synthase (442 aa).

The region spanning 2 to 120 (KKVFIRTFGC…LPKMIVDKET (119 aa)) is the MTTase N-terminal domain. 6 residues coordinate [4Fe-4S] cluster: Cys11, Cys49, Cys83, Cys157, Cys161, and Cys164. Residues 143-375 (RVEGGAAFVS…NEVIEAETAR (233 aa)) form the Radical SAM core domain. The TRAM domain occupies 378-441 (QTMIGTVQRC…TFSLRGKVVE (64 aa)).

This sequence belongs to the methylthiotransferase family. MiaB subfamily. As to quaternary structure, monomer. Requires [4Fe-4S] cluster as cofactor.

It is found in the cytoplasm. It carries out the reaction N(6)-dimethylallyladenosine(37) in tRNA + (sulfur carrier)-SH + AH2 + 2 S-adenosyl-L-methionine = 2-methylsulfanyl-N(6)-dimethylallyladenosine(37) in tRNA + (sulfur carrier)-H + 5'-deoxyadenosine + L-methionine + A + S-adenosyl-L-homocysteine + 2 H(+). Its function is as follows. Catalyzes the methylthiolation of N6-(dimethylallyl)adenosine (i(6)A), leading to the formation of 2-methylthio-N6-(dimethylallyl)adenosine (ms(2)i(6)A) at position 37 in tRNAs that read codons beginning with uridine. This is tRNA-2-methylthio-N(6)-dimethylallyladenosine synthase from Neisseria meningitidis serogroup C (strain 053442).